The sequence spans 400 residues: MNAVYLDNNATTRVDPAAVSAMLPFFTEQFGNASSMHAFGAEVGGALHTARRQLQALLGAEFDHEIVYTAGGTESDNTAILSALETQAGRNEIVTSAVEHPAVLALCAWLEKTRGTRVHYIGVDARGRLDIDAYRRALSPRTAIASIMWANNETGTIFPVETLAAVAHEAGALFHTDAVQAVGKIPMNLRHSEIDMLSLSGHKLHAPKGIGALYVRRGVRLRPLIRGGHQERGRRAGTENVPGIIGLGVAAELARHHIDEENTRVRALRDRLEQGLLERIGNAWVTGDTENRLPNTANVAFEFIEGEAILLLMNKAGIAASSGSACTSGSLEPSHVLRAMHVPYTAAHGAIRFSFSRENTDADVDRVLDVMPGIIAKLREMSPFWDGAAAAKSGFAPTYA.

Pyridoxal 5'-phosphate-binding positions include 72-73, asparagine 152, glutamine 180, and 200-202; these read GT and SGH. Lysine 203 is subject to N6-(pyridoxal phosphate)lysine. A pyridoxal 5'-phosphate-binding site is contributed by threonine 238. Catalysis depends on cysteine 326, which acts as the Cysteine persulfide intermediate. [2Fe-2S] cluster is bound at residue cysteine 326.

The protein belongs to the class-V pyridoxal-phosphate-dependent aminotransferase family. NifS/IscS subfamily. As to quaternary structure, homodimer. Pyridoxal 5'-phosphate is required as a cofactor.

The catalysed reaction is (sulfur carrier)-H + L-cysteine = (sulfur carrier)-SH + L-alanine. Catalyzes the removal of elemental sulfur atoms from cysteine to produce alanine. Seems to participate in the biosynthesis of the nitrogenase metalloclusters by providing the inorganic sulfur required for the Fe-S core formation. The protein is Cysteine desulfurase of Gluconacetobacter diazotrophicus (strain ATCC 49037 / DSM 5601 / CCUG 37298 / CIP 103539 / LMG 7603 / PAl5).